We begin with the raw amino-acid sequence, 268 residues long: Ribosomal RNA small subunit methyltransferase A (268 aa).

S-adenosyl-L-methionine is bound by residues N10, I12, G37, E58, D83, and N107.

Belongs to the class I-like SAM-binding methyltransferase superfamily. rRNA adenine N(6)-methyltransferase family. RsmA subfamily.

The protein localises to the cytoplasm. The enzyme catalyses adenosine(1518)/adenosine(1519) in 16S rRNA + 4 S-adenosyl-L-methionine = N(6)-dimethyladenosine(1518)/N(6)-dimethyladenosine(1519) in 16S rRNA + 4 S-adenosyl-L-homocysteine + 4 H(+). Specifically dimethylates two adjacent adenosines (A1518 and A1519) in the loop of a conserved hairpin near the 3'-end of 16S rRNA in the 30S particle. May play a critical role in biogenesis of 30S subunits. This chain is Ribosomal RNA small subunit methyltransferase A, found in Caldanaerobacter subterraneus subsp. tengcongensis (strain DSM 15242 / JCM 11007 / NBRC 100824 / MB4) (Thermoanaerobacter tengcongensis).